Here is a 387-residue protein sequence, read N- to C-terminus: O-phospho-L-seryl-tRNA:Cys-tRNA synthase 2 (387 aa).

Pyridoxal 5'-phosphate-binding positions include 89–90 (AR), Asn196, and 219–221 (SGH). Lys222 is modified (N6-(pyridoxal phosphate)lysine).

Belongs to the SepCysS family. In terms of assembly, homodimer. Interacts with SepRS. The cofactor is pyridoxal 5'-phosphate.

It carries out the reaction O-phospho-L-seryl-tRNA(Cys) + hydrogen sulfide + H(+) = L-cysteinyl-tRNA(Cys) + phosphate. Functionally, converts O-phospho-L-seryl-tRNA(Cys) (Sep-tRNA(Cys)) to L-cysteinyl-tRNA(Cys) (Cys-tRNA(Cys)). This chain is O-phospho-L-seryl-tRNA:Cys-tRNA synthase 2, found in Methanococcoides burtonii (strain DSM 6242 / NBRC 107633 / OCM 468 / ACE-M).